We begin with the raw amino-acid sequence, 324 residues long: Glyceraldehyde-3-phosphate dehydrogenase 1 (324 aa).

NAD(+)-binding positions include 13–14 (RI), aspartate 35, and lysine 85. D-glyceraldehyde 3-phosphate-binding positions include 157–159 (SCT), threonine 188, 217–218 (TG), and arginine 240. Cysteine 158 acts as the Nucleophile in catalysis. Asparagine 322 contacts NAD(+).

The protein belongs to the glyceraldehyde-3-phosphate dehydrogenase family. Homotetramer.

It is found in the cytoplasm. It catalyses the reaction D-glyceraldehyde 3-phosphate + phosphate + NAD(+) = (2R)-3-phospho-glyceroyl phosphate + NADH + H(+). It functions in the pathway carbohydrate degradation; glycolysis; pyruvate from D-glyceraldehyde 3-phosphate: step 1/5. The protein is Glyceraldehyde-3-phosphate dehydrogenase 1 (GPD-1) of Globodera rostochiensis (Golden nematode worm).